Consider the following 397-residue polypeptide: Tryptophan synthase beta chain (397 aa).

Position 87 is an N6-(pyridoxal phosphate)lysine (Lys-87).

This sequence belongs to the TrpB family. In terms of assembly, tetramer of two alpha and two beta chains. Requires pyridoxal 5'-phosphate as cofactor.

The catalysed reaction is (1S,2R)-1-C-(indol-3-yl)glycerol 3-phosphate + L-serine = D-glyceraldehyde 3-phosphate + L-tryptophan + H2O. The protein operates within amino-acid biosynthesis; L-tryptophan biosynthesis; L-tryptophan from chorismate: step 5/5. Its function is as follows. The beta subunit is responsible for the synthesis of L-tryptophan from indole and L-serine. This Escherichia coli O139:H28 (strain E24377A / ETEC) protein is Tryptophan synthase beta chain.